We begin with the raw amino-acid sequence, 502 residues long: Lysine--tRNA ligase (502 aa).

The Mg(2+) site is built by E413 and E420.

It belongs to the class-II aminoacyl-tRNA synthetase family. As to quaternary structure, homodimer. The cofactor is Mg(2+).

It is found in the cytoplasm. The catalysed reaction is tRNA(Lys) + L-lysine + ATP = L-lysyl-tRNA(Lys) + AMP + diphosphate. The chain is Lysine--tRNA ligase (lysS) from Haemophilus influenzae (strain ATCC 51907 / DSM 11121 / KW20 / Rd).